Reading from the N-terminus, the 644-residue chain is 1-deoxy-D-xylulose-5-phosphate synthase (644 aa).

Thiamine diphosphate is bound by residues H78 and 120 to 122 (GHA). Residue D149 coordinates Mg(2+). Residues 150–151 (AA), N178, and E373 contribute to the thiamine diphosphate site. Residue N178 coordinates Mg(2+).

This sequence belongs to the transketolase family. DXPS subfamily. Homodimer. Requires Mg(2+) as cofactor. It depends on thiamine diphosphate as a cofactor.

It catalyses the reaction D-glyceraldehyde 3-phosphate + pyruvate + H(+) = 1-deoxy-D-xylulose 5-phosphate + CO2. The protein operates within metabolic intermediate biosynthesis; 1-deoxy-D-xylulose 5-phosphate biosynthesis; 1-deoxy-D-xylulose 5-phosphate from D-glyceraldehyde 3-phosphate and pyruvate: step 1/1. Functionally, catalyzes the acyloin condensation reaction between C atoms 2 and 3 of pyruvate and glyceraldehyde 3-phosphate to yield 1-deoxy-D-xylulose-5-phosphate (DXP). In Chlamydia abortus (strain DSM 27085 / S26/3) (Chlamydophila abortus), this protein is 1-deoxy-D-xylulose-5-phosphate synthase.